Consider the following 245-residue polypeptide: 1-(5-phosphoribosyl)-5-[(5-phosphoribosylamino)methylideneamino] imidazole-4-carboxamide isomerase (245 aa).

Asp-15 acts as the Proton acceptor in catalysis. The active-site Proton donor is the Asp-135.

Belongs to the HisA/HisF family.

Its subcellular location is the cytoplasm. The catalysed reaction is 1-(5-phospho-beta-D-ribosyl)-5-[(5-phospho-beta-D-ribosylamino)methylideneamino]imidazole-4-carboxamide = 5-[(5-phospho-1-deoxy-D-ribulos-1-ylimino)methylamino]-1-(5-phospho-beta-D-ribosyl)imidazole-4-carboxamide. Its pathway is amino-acid biosynthesis; L-histidine biosynthesis; L-histidine from 5-phospho-alpha-D-ribose 1-diphosphate: step 4/9. In Haloquadratum walsbyi (strain DSM 16790 / HBSQ001), this protein is 1-(5-phosphoribosyl)-5-[(5-phosphoribosylamino)methylideneamino] imidazole-4-carboxamide isomerase.